A 196-amino-acid polypeptide reads, in one-letter code: Holliday junction branch migration complex subunit RuvA (196 aa).

A domain I region spans residues 1–63 (MINKIYGKIV…DDDVKLFGFL (63 aa)). The domain II stretch occupies residues 64–142 (NISEREVFEN…KGDESSSYML (79 aa)). A region of interest (flexible linker) is located at residue Lys-143. The domain III stretch occupies residues 143–196 (KFKELEQSIVNMGFDRKLVVVAFREIMLSDKFLILKEAEQEQFLFTETLKRLSV).

Belongs to the RuvA family. As to quaternary structure, homotetramer. Forms an RuvA(8)-RuvB(12)-Holliday junction (HJ) complex. HJ DNA is sandwiched between 2 RuvA tetramers; dsDNA enters through RuvA and exits via RuvB. An RuvB hexamer assembles on each DNA strand where it exits the tetramer. Each RuvB hexamer is contacted by two RuvA subunits (via domain III) on 2 adjacent RuvB subunits; this complex drives branch migration. In the full resolvosome a probable DNA-RuvA(4)-RuvB(12)-RuvC(2) complex forms which resolves the HJ.

Its subcellular location is the cytoplasm. The RuvA-RuvB-RuvC complex processes Holliday junction (HJ) DNA during genetic recombination and DNA repair, while the RuvA-RuvB complex plays an important role in the rescue of blocked DNA replication forks via replication fork reversal (RFR). RuvA specifically binds to HJ cruciform DNA, conferring on it an open structure. The RuvB hexamer acts as an ATP-dependent pump, pulling dsDNA into and through the RuvAB complex. HJ branch migration allows RuvC to scan DNA until it finds its consensus sequence, where it cleaves and resolves the cruciform DNA. The polypeptide is Holliday junction branch migration complex subunit RuvA (Borrelia recurrentis (strain A1)).